Here is a 94-residue protein sequence, read N- to C-terminus: Acylphosphatase (94 aa).

The Acylphosphatase-like domain maps to 8–94 (HIRAWVSGKV…ETPPLGFEVC (87 aa)). Residues Arg23 and Asn41 contribute to the active site.

Belongs to the acylphosphatase family.

The enzyme catalyses an acyl phosphate + H2O = a carboxylate + phosphate + H(+). The polypeptide is Acylphosphatase (acyP) (Hahella chejuensis (strain KCTC 2396)).